Consider the following 671-residue polypeptide: Beta-galactosidase 1 (671 aa).

The first 18 residues, 1–18, serve as a signal peptide directing secretion; it reads MKLIVLIFFLLFINLNYC. Catalysis depends on Glu-200, which acts as the Proton donor. N-linked (GlcNAc...) asparagine glycosylation occurs at Asn-228. Residue Glu-288 is the Nucleophile of the active site. Asn-321, Asn-391, Asn-400, Asn-499, Asn-509, Asn-564, and Asn-595 each carry an N-linked (GlcNAc...) asparagine glycan.

This sequence belongs to the glycosyl hydrolase 35 family.

The protein localises to the lysosome. The enzyme catalyses Hydrolysis of terminal non-reducing beta-D-galactose residues in beta-D-galactosides.. Its function is as follows. Cleaves beta-linked terminal galactosyl residues from gangliosides, glycoproteins, and glycosaminoglycans. The chain is Beta-galactosidase 1 (glb1) from Dictyostelium discoideum (Social amoeba).